The chain runs to 110 residues: Chagasin (110 aa).

A BC loop motif is present at residues 29 to 34 (NPTTGF). A DE loop motif is present at residues 59–68 (PPDSKLLGAG). The short motif at 91–100 (RPWTGPSHDS) is the FG loop element.

The protein belongs to the protease inhibitor I42 family. As to quaternary structure, interacts with cruzipain.

It localises to the flagellar pocket. It is found in the cytoplasmic vesicle. The protein localises to the cell surface. Its function is as follows. Cysteine protease inhibitor. Inhibits cysteine protease cruzipain. In Trypanosoma cruzi, this protein is Chagasin (cha).